A 163-amino-acid polypeptide reads, in one-letter code: Cyclic pyranopterin monophosphate synthase (163 aa).

Substrate is bound by residues 75-77 (LCH) and 113-114 (ME). The active site involves D128.

It belongs to the MoaC family. Homohexamer; trimer of dimers.

The enzyme catalyses (8S)-3',8-cyclo-7,8-dihydroguanosine 5'-triphosphate = cyclic pyranopterin phosphate + diphosphate. The protein operates within cofactor biosynthesis; molybdopterin biosynthesis. Catalyzes the conversion of (8S)-3',8-cyclo-7,8-dihydroguanosine 5'-triphosphate to cyclic pyranopterin monophosphate (cPMP). This chain is Cyclic pyranopterin monophosphate synthase, found in Magnetococcus marinus (strain ATCC BAA-1437 / JCM 17883 / MC-1).